Here is a 392-residue protein sequence, read N- to C-terminus: Mycofactocin maturase MftC (392 aa).

In terms of domain architecture, Radical SAM core spans 18–228; the sequence is LDAPICLTWE…YDWLVAKGDR (211 aa). Residues cysteine 32, cysteine 36, cysteine 39, cysteine 253, cysteine 260, cysteine 271, cysteine 312, cysteine 315, cysteine 321, cysteine 325, and cysteine 343 each coordinate [4Fe-4S] cluster. A compositionally biased stretch (basic and acidic residues) spans 354–367; sequence KERVKPKPSGDHSR. Residues 354 to 377 are disordered; that stretch reads KERVKPKPSGDHSRGTKQGPVALK.

This sequence belongs to the radical SAM superfamily. MftC family. [4Fe-4S] cluster serves as cofactor.

The enzyme catalyses [mycofactocin precursor peptide]-C-terminal glycyl-L-valyl-L-tyrosine + S-adenosyl-L-methionine = [mycofactocin precursor peptide]-C-terminal glycyl-N-{[2-(4-hydroxyphenyl)ethenyl]-3-methylbutanamide} + 5'-deoxyadenosine + L-methionine + CO2. The catalysed reaction is [mycofactocin precursor peptide]-C-terminal glycyl-N-{[2-(4-hydroxyphenyl)ethenyl]-3-methylbutanamide} + AH2 + S-adenosyl-L-methionine = [mycofactocin precursor peptide]-C-terminal glycyl-N-{5-[(4-hydroxyphenyl)methyl]-4,4-dimethyl-2-oxopyrrolidin-3-yl}acetamide + 5'-deoxyadenosine + L-methionine + A + H(+). Radical S-adenosylmethionine (SAM) enzyme responsible for the first step of the biosynthesis of the enzyme cofactor mycofactocin (MFT). Catalyzes two reactions at the C-terminus of the mycofactocin precursor (the MftA peptide). The first one is the oxidative decarboxylation of the C-terminal L-tyrosine of MftA, forming an unsaturated tyramine moiety. The second reaction is the cross-linking of the tyramine with the penultimate L-valine residue, forming a five-membered lactam ring. Its activity requires the presence of the MftB chaperone. Is required for the in vivo ethanol assimilation in M.smegmatis. The polypeptide is Mycofactocin maturase MftC (Mycolicibacterium smegmatis (strain ATCC 700084 / mc(2)155) (Mycobacterium smegmatis)).